Consider the following 658-residue polypeptide: Sulfate transporter 3.1 (658 aa).

Residues 1-85 lie on the Cytoplasmic side of the membrane; the sequence is MGTEDYTFPQ…RYNLKFFKSD (85 aa). A helical membrane pass occupies residues 86-106; it reads LIAGITIASLAIPQGISYAKL. Residues 107 to 108 are Extracellular-facing; it reads AN. Residues 109–129 form a helical membrane-spanning segment; it reads LPPILGLYSSFVPPLVYAVLG. Topologically, residues 130–133 are cytoplasmic; that stretch reads SSRD. A helical transmembrane segment spans residues 134–154; the sequence is LAVGTVAVASLLTGAMLSKEV. Residues 155-163 are Extracellular-facing; that stretch reads DAEKDPKLY. The chain crosses the membrane as a helical span at residues 164–184; that stretch reads LHLAFTATFFAGVLEASLGIF. A topological domain (cytoplasmic) is located at residue Arg185. A helical membrane pass occupies residues 186–206; it reads LGFIVDFLSHATIVGFMGGAA. Residues 207–245 lie on the Extracellular side of the membrane; sequence TVVSLQQLKGIFGLKHFTDSTDVISVMRSVFSQTHEWRW. The chain crosses the membrane as a helical span at residues 246–266; it reads ESGVLGCGFLFFLLSTRYFSI. Residues 267-271 are Cytoplasmic-facing; sequence KKPKF. Residues 272-292 form a helical membrane-spanning segment; that stretch reads FWVAAMAPLTSVILGSLLVYF. At 293-332 the chain is on the extracellular side; that stretch reads THAERHGVQVIGDLKKGLNPLSGSDLIFTSPYMSTAVKTG. The helical transmembrane segment at 333–353 threads the bilayer; it reads LITGIIALAEGVAVGRSFAMF. At 354-363 the chain is on the cytoplasmic side; sequence KNYNIDGNKE. Residues 364–384 traverse the membrane as a helical segment; sequence MIAFGMMNIVGSFTSCYLTTG. Over 385–398 the chain is Extracellular; sequence PFSRSAVNYNAGCK. Residues 399–419 traverse the membrane as a helical segment; that stretch reads TAMSNIVMAIAVMFTLLFLTP. Topologically, residues 420–425 are cytoplasmic; sequence LFHYTP. Residues 426 to 446 form a helical membrane-spanning segment; sequence LVVLSAIIISAMLGLIDYQAA. Residues 447-464 are Extracellular-facing; it reads IHLWKVDKFDFLVCMSAY. Residues 465-485 form a helical membrane-spanning segment; that stretch reads VGVVFGSVEIGLVVAVAISIA. Over 486 to 658 the chain is Cytoplasmic; sequence RLLLFVSRPK…ASKNEPWNNV (173 aa). The 125-residue stretch at 513 to 637 folds into the STAS domain; that stretch reads QYPSSRTVPG…LTVGEAVEAC (125 aa).

It belongs to the SLC26A/SulP transporter (TC 2.A.53) family. Expressed only in leaves.

Its subcellular location is the membrane. Its function is as follows. H(+)/sulfate cotransporter that may play a role in the regulation of sulfate assimilation. The polypeptide is Sulfate transporter 3.1 (SULTR3;1) (Arabidopsis thaliana (Mouse-ear cress)).